We begin with the raw amino-acid sequence, 98 residues long: Integration host factor subunit alpha (98 aa).

A disordered region spans residues 49-71; that stretch reads FGNFDLRDKNQRPGRNPKTGEDI.

This sequence belongs to the bacterial histone-like protein family. As to quaternary structure, heterodimer of an alpha and a beta chain.

In terms of biological role, this protein is one of the two subunits of integration host factor, a specific DNA-binding protein that functions in genetic recombination as well as in transcriptional and translational control. This is Integration host factor subunit alpha from Shewanella oneidensis (strain ATCC 700550 / JCM 31522 / CIP 106686 / LMG 19005 / NCIMB 14063 / MR-1).